The primary structure comprises 165 residues: Large ribosomal subunit protein eL15 (165 aa).

The interval 126–147 (TSAGRKSRGLGKGHKFHHTIGG) is disordered. Basic residues predominate over residues 130–143 (RKSRGLGKGHKFHH).

It belongs to the eukaryotic ribosomal protein eL15 family. In terms of assembly, component of the large ribosomal subunit.

The protein resides in the cytoplasm. In terms of biological role, component of the large ribosomal subunit. The ribosome is a large ribonucleoprotein complex responsible for the synthesis of proteins in the cell. This Gallus gallus (Chicken) protein is Large ribosomal subunit protein eL15 (RPL15).